Reading from the N-terminus, the 1392-residue chain is ATP-dependent helicase/nuclease subunit A (1392 aa).

Positions 3–489 (NPKWTPAQQA…IDLNQNFRSR (487 aa)) constitute a UvrD-like helicase ATP-binding domain. Residue 24 to 31 (AAAGSGKT) participates in ATP binding. Disordered regions lie at residues 291 to 319 (RGSK…KARD), 556 to 594 (RGAE…LEEA), and 1051 to 1126 (GPVQ…LDTK). 2 stretches are compositionally biased toward basic and acidic residues: residues 305 to 319 (ENSK…KARD) and 569 to 583 (AKGE…REPE). Residues 556–886 (RGAEDAATGA…RFITVHSSKG (331 aa)) form the UvrD-like helicase C-terminal domain. Over residues 584-594 (SGDDESSLEEA) the composition is skewed to acidic residues. Residues 1088 to 1113 (ASGKTEIPGETKNSEETKTSEDKKNL) show a composition bias toward basic and acidic residues.

Belongs to the helicase family. AddA subfamily. In terms of assembly, heterodimer of AddA and AddB/RexB. The cofactor is Mg(2+).

The enzyme catalyses Couples ATP hydrolysis with the unwinding of duplex DNA by translocating in the 3'-5' direction.. It carries out the reaction ATP + H2O = ADP + phosphate + H(+). Its function is as follows. The heterodimer acts as both an ATP-dependent DNA helicase and an ATP-dependent, dual-direction single-stranded exonuclease. Recognizes the chi site generating a DNA molecule suitable for the initiation of homologous recombination. The AddA nuclease domain is required for chi fragment generation; this subunit has the helicase and 3' -&gt; 5' nuclease activities. The sequence is that of ATP-dependent helicase/nuclease subunit A from Desulfitobacterium hafniense (strain Y51).